The chain runs to 457 residues: Serine/threonine-protein phosphatase 2A regulatory subunit B'' subunit gamma (457 aa).

2 consecutive EF-hand domains span residues 276-311 (PSALRVYGQYLNLDKDHNGMLSKEELSRYGTGTLTS) and 344-379 (KEPAALQYIFKLLDMENKGYLNVFALNYFFRAIQEQ). Ca(2+) is bound by residues Asp-289, Asp-291, Asn-293, Met-295, and Glu-300.

It is found in the nucleus. Its subcellular location is the cytoplasm. In terms of biological role, possible role in the regulation of cell death. This chain is Serine/threonine-protein phosphatase 2A regulatory subunit B'' subunit gamma (ppp2r3c), found in Danio rerio (Zebrafish).